We begin with the raw amino-acid sequence, 54 residues long: Ovomucoid (54 aa).

The 51-residue stretch at 4–54 (VDCSDYPKPACSLDYMPLCGSDSKTYSNKCNFCNAVVDSNGTLTLSHFEKC) folds into the Kazal-like domain. Intrachain disulfides connect cysteine 6-cysteine 36, cysteine 14-cysteine 33, and cysteine 22-cysteine 54. An N-linked (GlcNAc...) asparagine glycan is attached at asparagine 43.

Its subcellular location is the secreted. This Chroicocephalus ridibundus (Black-headed gull) protein is Ovomucoid.